Reading from the N-terminus, the 464-residue chain is Uronate isomerase (464 aa).

The protein belongs to the metallo-dependent hydrolases superfamily. Uronate isomerase family.

It carries out the reaction D-glucuronate = D-fructuronate. The catalysed reaction is aldehydo-D-galacturonate = keto-D-tagaturonate. Its pathway is carbohydrate metabolism; pentose and glucuronate interconversion. The protein is Uronate isomerase of Caldicellulosiruptor bescii (strain ATCC BAA-1888 / DSM 6725 / KCTC 15123 / Z-1320) (Anaerocellum thermophilum).